A 120-amino-acid chain; its full sequence is Fluoride-specific ion channel FluC 1 (120 aa).

2 helical membrane-spanning segments follow: residues 3–23 (ALLT…LNCA) and 42–62 (LGCL…VAAL). Na(+) is bound by residues Gly69 and Thr72. Residues 99 to 119 (ANLAAGVGAAVLGMAAVGWFL) traverse the membrane as a helical segment.

The protein belongs to the fluoride channel Fluc/FEX (TC 1.A.43) family.

It is found in the cell membrane. The enzyme catalyses fluoride(in) = fluoride(out). With respect to regulation, na(+) is not transported, but it plays an essential structural role and its presence is essential for fluoride channel function. Fluoride-specific ion channel. Important for reducing fluoride concentration in the cell, thus reducing its toxicity. This is Fluoride-specific ion channel FluC 1 from Thermobifida fusca (strain YX).